We begin with the raw amino-acid sequence, 95 residues long: Pyrimidine/purine nucleoside phosphorylase (95 aa).

It belongs to the nucleoside phosphorylase PpnP family.

The enzyme catalyses a purine D-ribonucleoside + phosphate = a purine nucleobase + alpha-D-ribose 1-phosphate. It catalyses the reaction adenosine + phosphate = alpha-D-ribose 1-phosphate + adenine. The catalysed reaction is cytidine + phosphate = cytosine + alpha-D-ribose 1-phosphate. It carries out the reaction guanosine + phosphate = alpha-D-ribose 1-phosphate + guanine. The enzyme catalyses inosine + phosphate = alpha-D-ribose 1-phosphate + hypoxanthine. It catalyses the reaction thymidine + phosphate = 2-deoxy-alpha-D-ribose 1-phosphate + thymine. The catalysed reaction is uridine + phosphate = alpha-D-ribose 1-phosphate + uracil. It carries out the reaction xanthosine + phosphate = alpha-D-ribose 1-phosphate + xanthine. In terms of biological role, catalyzes the phosphorolysis of diverse nucleosides, yielding D-ribose 1-phosphate and the respective free bases. Can use uridine, adenosine, guanosine, cytidine, thymidine, inosine and xanthosine as substrates. Also catalyzes the reverse reactions. In Yersinia pestis bv. Antiqua (strain Antiqua), this protein is Pyrimidine/purine nucleoside phosphorylase.